The following is a 227-amino-acid chain: Cytochrome c oxidase subunit 2 (227 aa).

Residues 1–14 (MAYTFQLGLQDATS) lie on the Mitochondrial intermembrane side of the membrane. Residues 15–45 (PIMEELTNFHDHTLMIVFLISSLVLYVISLM) form a helical membrane-spanning segment. The Mitochondrial matrix segment spans residues 46-59 (LTTKLTHTNTMDAQ). The helical transmembrane segment at 60-87 (EVETIWTILPAVILILIALPSLRILYMM) threads the bilayer. The Mitochondrial intermembrane segment spans residues 88–227 (DEINNPVLTV…HFENWSASMI (140 aa)). Cu cation is bound by residues histidine 161, cysteine 196, glutamate 198, cysteine 200, histidine 204, and methionine 207. Residue glutamate 198 coordinates Mg(2+).

It belongs to the cytochrome c oxidase subunit 2 family. As to quaternary structure, component of the cytochrome c oxidase (complex IV, CIV), a multisubunit enzyme composed of 14 subunits. The complex is composed of a catalytic core of 3 subunits MT-CO1, MT-CO2 and MT-CO3, encoded in the mitochondrial DNA, and 11 supernumerary subunits COX4I, COX5A, COX5B, COX6A, COX6B, COX6C, COX7A, COX7B, COX7C, COX8 and NDUFA4, which are encoded in the nuclear genome. The complex exists as a monomer or a dimer and forms supercomplexes (SCs) in the inner mitochondrial membrane with NADH-ubiquinone oxidoreductase (complex I, CI) and ubiquinol-cytochrome c oxidoreductase (cytochrome b-c1 complex, complex III, CIII), resulting in different assemblies (supercomplex SCI(1)III(2)IV(1) and megacomplex MCI(2)III(2)IV(2)). Found in a complex with TMEM177, COA6, COX18, COX20, SCO1 and SCO2. Interacts with TMEM177 in a COX20-dependent manner. Interacts with COX20. Interacts with COX16. Cu cation is required as a cofactor.

It is found in the mitochondrion inner membrane. It carries out the reaction 4 Fe(II)-[cytochrome c] + O2 + 8 H(+)(in) = 4 Fe(III)-[cytochrome c] + 2 H2O + 4 H(+)(out). Its function is as follows. Component of the cytochrome c oxidase, the last enzyme in the mitochondrial electron transport chain which drives oxidative phosphorylation. The respiratory chain contains 3 multisubunit complexes succinate dehydrogenase (complex II, CII), ubiquinol-cytochrome c oxidoreductase (cytochrome b-c1 complex, complex III, CIII) and cytochrome c oxidase (complex IV, CIV), that cooperate to transfer electrons derived from NADH and succinate to molecular oxygen, creating an electrochemical gradient over the inner membrane that drives transmembrane transport and the ATP synthase. Cytochrome c oxidase is the component of the respiratory chain that catalyzes the reduction of oxygen to water. Electrons originating from reduced cytochrome c in the intermembrane space (IMS) are transferred via the dinuclear copper A center (CU(A)) of subunit 2 and heme A of subunit 1 to the active site in subunit 1, a binuclear center (BNC) formed by heme A3 and copper B (CU(B)). The BNC reduces molecular oxygen to 2 water molecules using 4 electrons from cytochrome c in the IMS and 4 protons from the mitochondrial matrix. This Niviventer culturatus (Oldfield white-bellied rat) protein is Cytochrome c oxidase subunit 2 (MT-CO2).